Reading from the N-terminus, the 89-residue chain is Small ribosomal subunit protein uS14A (89 aa).

This sequence belongs to the universal ribosomal protein uS14 family. As to quaternary structure, part of the 30S ribosomal subunit. Contacts proteins S3 and S10.

Functionally, binds 16S rRNA, required for the assembly of 30S particles and may also be responsible for determining the conformation of the 16S rRNA at the A site. The polypeptide is Small ribosomal subunit protein uS14A (Bacillus velezensis (strain DSM 23117 / BGSC 10A6 / LMG 26770 / FZB42) (Bacillus amyloliquefaciens subsp. plantarum)).